Here is a 524-residue protein sequence, read N- to C-terminus: uncharacterized protein (524 aa).

The interval 1–65 is disordered; that stretch reads MSDPFFTRPE…IDEENEDTYE (65 aa). The span at 21 to 32 shows a compositional bias: basic and acidic residues; sequence SKREKENQKLER. Positions 51-64 are enriched in acidic residues; it reads GFEDEIDEENEDTY. WD repeat units follow at residues 131 to 176, 206 to 245, 248 to 287, 290 to 329, 342 to 380, 409 to 448, and 457 to 503; these read IETA…DTEN, DHVK…PQHC, HHRD…YIET, GHQD…QLVF, YMEG…PLFT, PQPR…RSFE, and SVYG…PNSG.

Its subcellular location is the nucleus. This is an uncharacterized protein from Schizosaccharomyces pombe (strain 972 / ATCC 24843) (Fission yeast).